Here is a 127-residue protein sequence, read N- to C-terminus: Small ribosomal subunit protein uS11 (127 aa).

Belongs to the universal ribosomal protein uS11 family. In terms of assembly, part of the 30S ribosomal subunit. Interacts with proteins S7 and S18. Binds to IF-3.

In terms of biological role, located on the platform of the 30S subunit, it bridges several disparate RNA helices of the 16S rRNA. Forms part of the Shine-Dalgarno cleft in the 70S ribosome. This is Small ribosomal subunit protein uS11 from Rickettsia felis (strain ATCC VR-1525 / URRWXCal2) (Rickettsia azadi).